Here is a 179-residue protein sequence, read N- to C-terminus: 6,7-dimethyl-8-ribityllumazine synthase (179 aa).

5-amino-6-(D-ribitylamino)uracil contacts are provided by residues tryptophan 13, 45–47 (AVE), and 68–70 (VVI). 73–74 (DT) is a binding site for (2S)-2-hydroxy-3-oxobutyl phosphate. The Proton donor role is filled by histidine 76. Position 101 (phenylalanine 101) interacts with 5-amino-6-(D-ribitylamino)uracil. Arginine 115 contributes to the (2S)-2-hydroxy-3-oxobutyl phosphate binding site. A disordered region spans residues 157–179 (AKAAKKPAKAAAKTQKKKKKVRK).

The protein belongs to the DMRL synthase family.

The catalysed reaction is (2S)-2-hydroxy-3-oxobutyl phosphate + 5-amino-6-(D-ribitylamino)uracil = 6,7-dimethyl-8-(1-D-ribityl)lumazine + phosphate + 2 H2O + H(+). It participates in cofactor biosynthesis; riboflavin biosynthesis; riboflavin from 2-hydroxy-3-oxobutyl phosphate and 5-amino-6-(D-ribitylamino)uracil: step 1/2. Functionally, catalyzes the formation of 6,7-dimethyl-8-ribityllumazine by condensation of 5-amino-6-(D-ribitylamino)uracil with 3,4-dihydroxy-2-butanone 4-phosphate. This is the penultimate step in the biosynthesis of riboflavin. The protein is 6,7-dimethyl-8-ribityllumazine synthase of Bdellovibrio bacteriovorus (strain ATCC 15356 / DSM 50701 / NCIMB 9529 / HD100).